Here is a 103-residue protein sequence, read N- to C-terminus: Large ribosomal subunit protein uL24 (103 aa).

It belongs to the universal ribosomal protein uL24 family. As to quaternary structure, part of the 50S ribosomal subunit.

Functionally, one of two assembly initiator proteins, it binds directly to the 5'-end of the 23S rRNA, where it nucleates assembly of the 50S subunit. In terms of biological role, one of the proteins that surrounds the polypeptide exit tunnel on the outside of the subunit. The protein is Large ribosomal subunit protein uL24 of Haemophilus influenzae (strain 86-028NP).